The chain runs to 332 residues: Malate dehydrogenase 1, cytoplasmic (332 aa).

Residues 16–17 (QI) and Asp-43 contribute to the NAD(+) site. Methionine sulfoxide is present on Met-56. Gly-90 contributes to the NAD(+) binding site. Met-97 bears the Methionine sulfoxide mark. Arg-99 serves as a coordination point for oxaloacetate. Gln-113 provides a ligand contact to NAD(+). A Glycyl lysine isopeptide (Lys-Gly) (interchain with G-Cter in ubiquitin) cross-link involves residue Lys-119. Position 132 (Asn-132) interacts with NAD(+). Positions 132, 163, 188, and 243 each coordinate oxaloacetate. His-188 serves as the catalytic Proton acceptor.

This sequence belongs to the LDH/MDH superfamily. MDH type 2 family. As to quaternary structure, forms a homodimer. Forms a disulfide-linked homodimer upon oxidation. Interacts with 14-3-3-like proteins GRF1 GRF3 and GRF8. Interacts with TRX1, TRX2, TRX3, TRX4 and TRX5. As to expression, expressed in rosette leaves.

It localises to the cytoplasm. The enzyme catalyses (S)-malate + NAD(+) = oxaloacetate + NADH + H(+). Decreased activity upon treatment with hydrogen peroxide. Catalyzes a reversible NAD-dependent dehydrogenase reaction involved in central metabolism and redox homeostasis between organellar compartments. The sequence is that of Malate dehydrogenase 1, cytoplasmic (MDH1) from Arabidopsis thaliana (Mouse-ear cress).